Consider the following 327-residue polypeptide: Ventral anterior homeobox 1 (327 aa).

Residues 1–34 (MFGKQDKMDVRCSTETEANRVSKNGHKEGKDSKG) show a composition bias toward basic and acidic residues. A disordered region spans residues 1 to 41 (MFGKQDKMDVRCSTETEANRVSKNGHKEGKDSKGAEGNIST). Residues 99–158 (PKRTRTSFTAEQLYRLEMEFQRCQYVVGRERTELARQLNLSETQVKVWFQNRRTKQKKDQ) constitute a DNA-binding region (homeobox). The span at 230-245 (APAGGSPHPPSAGTAA) shows a compositional bias: low complexity. The tract at residues 230-249 (APAGGSPHPPSAGTAAGPPP) is disordered.

The protein belongs to the EMX homeobox family.

It localises to the nucleus. Functionally, transcription factor that plays a role in establishing dorsal-ventral polarity in the neural retina. The sequence is that of Ventral anterior homeobox 1 (VAX1) from Gallus gallus (Chicken).